The primary structure comprises 917 residues: Methionine--tRNA ligase, cytoplasmic (917 aa).

The 'HIGH' region signature appears at 44–54 (PYVNNVPHLGN). Residues 367 to 371 (KFSKS) carry the 'KMSKS' region motif. K370 is a binding site for ATP. 2 disordered regions span residues 591 to 623 (GSQD…GDKK) and 702 to 749 (SCTP…AAAA). A compositionally biased stretch (basic and acidic residues) spans 614 to 623 (PTKDKKGDKK). The segment covering 702-713 (SCTPTPTSTPAS) has biased composition (low complexity). Basic and acidic residues predominate over residues 732–741 (EPKKAKEQKK). The 102-residue stretch at 756–857 (DVGRLDMRVG…ADSKPGTPVV (102 aa)) folds into the tRNA-binding domain.

Belongs to the class-I aminoacyl-tRNA synthetase family.

Its subcellular location is the cytoplasm. The catalysed reaction is tRNA(Met) + L-methionine + ATP = L-methionyl-tRNA(Met) + AMP + diphosphate. The polypeptide is Methionine--tRNA ligase, cytoplasmic (Caenorhabditis elegans).